The following is a 477-amino-acid chain: Glycogen synthase (477 aa).

Position 15 (lysine 15) interacts with ADP-alpha-D-glucose.

The protein belongs to the glycosyltransferase 1 family. Bacterial/plant glycogen synthase subfamily.

The enzyme catalyses [(1-&gt;4)-alpha-D-glucosyl](n) + ADP-alpha-D-glucose = [(1-&gt;4)-alpha-D-glucosyl](n+1) + ADP + H(+). The protein operates within glycan biosynthesis; glycogen biosynthesis. Its function is as follows. Synthesizes alpha-1,4-glucan chains using ADP-glucose. The sequence is that of Glycogen synthase from Escherichia fergusonii (strain ATCC 35469 / DSM 13698 / CCUG 18766 / IAM 14443 / JCM 21226 / LMG 7866 / NBRC 102419 / NCTC 12128 / CDC 0568-73).